Consider the following 256-residue polypeptide: Small ribosomal subunit protein eS1B (256 aa).

The residue at position 2 (Ala2) is an N-acetylalanine; partial.

The protein belongs to the eukaryotic ribosomal protein eS1 family. As to quaternary structure, component of the small ribosomal subunit. Mature ribosomes consist of a small (40S) and a large (60S) subunit. The 40S subunit contains about 33 different proteins and 1 molecule of RNA (18S). The 60S subunit contains about 49 different proteins and 3 molecules of RNA (25S, 5.8S and 5S).

It is found in the cytoplasm. The chain is Small ribosomal subunit protein eS1B from Scheffersomyces stipitis (strain ATCC 58785 / CBS 6054 / NBRC 10063 / NRRL Y-11545) (Yeast).